A 296-amino-acid chain; its full sequence is 5,10-methylenetetrahydrofolate reductase (296 aa).

Residue Glu-28 is the Proton donor/acceptor of the active site. Thr-59 is an NADH binding site. Positions 60, 62, 88, 118, 119, 120, 132, 152, 156, 159, 165, 168, 171, and 172 each coordinate FAD. Residue Asp-120 coordinates (6S)-5-methyl-5,6,7,8-tetrahydrofolate. Gln-183 contacts NADH. Positions 183, 219, and 279 each coordinate (6S)-5-methyl-5,6,7,8-tetrahydrofolate.

Belongs to the methylenetetrahydrofolate reductase family. The cofactor is FAD.

The catalysed reaction is (6S)-5-methyl-5,6,7,8-tetrahydrofolate + NAD(+) = (6R)-5,10-methylene-5,6,7,8-tetrahydrofolate + NADH + H(+). Its pathway is one-carbon metabolism; tetrahydrofolate interconversion. The protein operates within amino-acid biosynthesis; L-methionine biosynthesis via de novo pathway. Functionally, catalyzes the NADH-dependent reduction of 5,10-methylenetetrahydrofolate to 5-methyltetrahydrofolate. Is required to provide the methyl group necessary for methionine synthetase to convert homocysteine to methionine; the methyl group is given by 5-methyltetrahydrofolate. The polypeptide is 5,10-methylenetetrahydrofolate reductase (metF) (Salmonella typhimurium (strain LT2 / SGSC1412 / ATCC 700720)).